The primary structure comprises 158 residues: Cyclic pyranopterin monophosphate synthase (158 aa).

Residues 75 to 77 (LCH) and 113 to 114 (ME) each bind substrate. D128 is a catalytic residue.

Belongs to the MoaC family. Homohexamer; trimer of dimers.

The enzyme catalyses (8S)-3',8-cyclo-7,8-dihydroguanosine 5'-triphosphate = cyclic pyranopterin phosphate + diphosphate. It functions in the pathway cofactor biosynthesis; molybdopterin biosynthesis. Its function is as follows. Catalyzes the conversion of (8S)-3',8-cyclo-7,8-dihydroguanosine 5'-triphosphate to cyclic pyranopterin monophosphate (cPMP). This is Cyclic pyranopterin monophosphate synthase from Histophilus somni (strain 129Pt) (Haemophilus somnus).